A 1893-amino-acid chain; its full sequence is Serine-aspartate repeat-containing protein I (1893 aa).

The N-terminal stretch at methionine 1–alanine 54 is a signal peptide. Residues glutamate 53–glutamine 333 form a disordered region. A compositionally biased stretch (basic and acidic residues) spans alanine 54 to alanine 222. A run of 21 repeats spans residues alanine 72–glutamate 83, proline 84–glutamate 95, proline 96–glutamate 107, proline 108–glutamate 119, proline 120–glutamate 131, proline 132–glutamate 143, proline 144–glutamate 155, proline 156–glutamate 167, proline 168–glutamate 179, proline 180–glutamate 191, proline 192–glutamate 203, alanine 204–glutamate 215, proline 216–glutamate 227, proline 228–glutamate 239, proline 240–glutamate 251, alanine 252–glutamate 263, alanine 264–glutamate 275, alanine 276–glutamate 287, proline 288–glutamate 299, proline 300–glutamate 311, and proline 312–glutamate 323. Residues alanine 72–glutamate 323 form a 21 X 12 AA tandem repeat of [AP]-[AE]-T-K-E-[EK]-A-[AV]-[IT]-[AST]-E-E region. Residues proline 240–isoleucine 284 show a composition bias toward basic and acidic residues. Over residues glutamate 286–threonine 302 the composition is skewed to acidic residues. Positions proline 312–histidine 325 are enriched in basic and acidic residues. The ligand binding A region stretch occupies residues alanine 324–proline 755. 2 CNA-B domains span residues threonine 756–proline 874 and lysine 875–glutamate 984. The tract at residues lysine 941 to leucine 1867 is disordered. Residues aspartate 955 to phenylalanine 975 show a composition bias toward basic and acidic residues. Residues tyrosine 981–serine 1836 are compositionally biased toward acidic residues. Residues aspartate 1837–aspartate 1851 are compositionally biased toward basic and acidic residues. An LPXTG sorting signal motif is present at residues leucine 1854 to glycine 1858. Threonine 1857 is modified (pentaglycyl murein peptidoglycan amidated threonine). Positions glycine 1858–lysine 1893 are cleaved as a propeptide — removed by sortase.

The protein belongs to the serine-aspartate repeat-containing protein (SDr) family.

Its subcellular location is the secreted. The protein localises to the cell wall. Its function is as follows. Responsible for collagen binding by S.saprophyticus. The protein is Serine-aspartate repeat-containing protein I (sdrI) of Staphylococcus saprophyticus.